Reading from the N-terminus, the 207-residue chain is dTTP/UTP pyrophosphatase (207 aa).

Catalysis depends on D87, which acts as the Proton acceptor.

This sequence belongs to the Maf family. YhdE subfamily. The cofactor is a divalent metal cation.

The protein localises to the cytoplasm. The catalysed reaction is dTTP + H2O = dTMP + diphosphate + H(+). It carries out the reaction UTP + H2O = UMP + diphosphate + H(+). In terms of biological role, nucleoside triphosphate pyrophosphatase that hydrolyzes dTTP and UTP. May have a dual role in cell division arrest and in preventing the incorporation of modified nucleotides into cellular nucleic acids. This chain is dTTP/UTP pyrophosphatase, found in Ralstonia nicotianae (strain ATCC BAA-1114 / GMI1000) (Ralstonia solanacearum).